Here is a 442-residue protein sequence, read N- to C-terminus: Exodeoxyribonuclease 7 large subunit (442 aa).

Belongs to the XseA family. In terms of assembly, heterooligomer composed of large and small subunits.

It localises to the cytoplasm. It catalyses the reaction Exonucleolytic cleavage in either 5'- to 3'- or 3'- to 5'-direction to yield nucleoside 5'-phosphates.. Bidirectionally degrades single-stranded DNA into large acid-insoluble oligonucleotides, which are then degraded further into small acid-soluble oligonucleotides. In Shewanella loihica (strain ATCC BAA-1088 / PV-4), this protein is Exodeoxyribonuclease 7 large subunit.